The primary structure comprises 561 residues: Dihydroxy-acid dehydratase (561 aa).

Asp78 contacts Mg(2+). Residue Cys119 coordinates [2Fe-2S] cluster. Mg(2+) contacts are provided by Asp120 and Lys121. Lys121 carries the post-translational modification N6-carboxylysine. [2Fe-2S] cluster is bound at residue Cys192. Residue Glu448 participates in Mg(2+) binding. The active-site Proton acceptor is the Ser474.

The protein belongs to the IlvD/Edd family. As to quaternary structure, homodimer. The cofactor is [2Fe-2S] cluster. Requires Mg(2+) as cofactor.

It carries out the reaction (2R)-2,3-dihydroxy-3-methylbutanoate = 3-methyl-2-oxobutanoate + H2O. It catalyses the reaction (2R,3R)-2,3-dihydroxy-3-methylpentanoate = (S)-3-methyl-2-oxopentanoate + H2O. Its pathway is amino-acid biosynthesis; L-isoleucine biosynthesis; L-isoleucine from 2-oxobutanoate: step 3/4. It participates in amino-acid biosynthesis; L-valine biosynthesis; L-valine from pyruvate: step 3/4. Functionally, functions in the biosynthesis of branched-chain amino acids. Catalyzes the dehydration of (2R,3R)-2,3-dihydroxy-3-methylpentanoate (2,3-dihydroxy-3-methylvalerate) into 2-oxo-3-methylpentanoate (2-oxo-3-methylvalerate) and of (2R)-2,3-dihydroxy-3-methylbutanoate (2,3-dihydroxyisovalerate) into 2-oxo-3-methylbutanoate (2-oxoisovalerate), the penultimate precursor to L-isoleucine and L-valine, respectively. This chain is Dihydroxy-acid dehydratase, found in Sulfurimonas denitrificans (strain ATCC 33889 / DSM 1251) (Thiomicrospira denitrificans (strain ATCC 33889 / DSM 1251)).